Consider the following 423-residue polypeptide: Serine hydroxymethyltransferase (423 aa).

119 to 121 (GHI) contacts (6S)-5,6,7,8-tetrahydrofolate. Position 225 is an N6-(pyridoxal phosphate)lysine (K225).

It belongs to the SHMT family. Homodimer. Pyridoxal 5'-phosphate serves as cofactor.

It localises to the cytoplasm. The catalysed reaction is (6R)-5,10-methylene-5,6,7,8-tetrahydrofolate + glycine + H2O = (6S)-5,6,7,8-tetrahydrofolate + L-serine. It functions in the pathway one-carbon metabolism; tetrahydrofolate interconversion. Its pathway is amino-acid biosynthesis; glycine biosynthesis; glycine from L-serine: step 1/1. Its function is as follows. Catalyzes the reversible interconversion of serine and glycine with tetrahydrofolate (THF) serving as the one-carbon carrier. Also exhibits THF-independent aldolase activity toward beta-hydroxyamino acids, producing glycine and aldehydes, via a retro-aldol mechanism. This is Serine hydroxymethyltransferase from Methanocella arvoryzae (strain DSM 22066 / NBRC 105507 / MRE50).